The sequence spans 426 residues: Serine--tRNA ligase (426 aa).

L-serine is bound at residue 233–235 (TAE). 264-266 (RSE) contributes to the ATP binding site. Glu-287 is a binding site for L-serine. 351–354 (EISS) serves as a coordination point for ATP. Residue Ser-387 coordinates L-serine.

This sequence belongs to the class-II aminoacyl-tRNA synthetase family. Type-1 seryl-tRNA synthetase subfamily. Homodimer. The tRNA molecule binds across the dimer.

It is found in the cytoplasm. The enzyme catalyses tRNA(Ser) + L-serine + ATP = L-seryl-tRNA(Ser) + AMP + diphosphate + H(+). It carries out the reaction tRNA(Sec) + L-serine + ATP = L-seryl-tRNA(Sec) + AMP + diphosphate + H(+). It participates in aminoacyl-tRNA biosynthesis; selenocysteinyl-tRNA(Sec) biosynthesis; L-seryl-tRNA(Sec) from L-serine and tRNA(Sec): step 1/1. Its function is as follows. Catalyzes the attachment of serine to tRNA(Ser). Is also able to aminoacylate tRNA(Sec) with serine, to form the misacylated tRNA L-seryl-tRNA(Sec), which will be further converted into selenocysteinyl-tRNA(Sec). This is Serine--tRNA ligase from Francisella philomiragia subsp. philomiragia (strain ATCC 25017 / CCUG 19701 / FSC 153 / O#319-036).